The sequence spans 534 residues: Inosine-5'-monophosphate dehydrogenase (534 aa).

2 CBS domains span residues 117–181 (YVMQ…GTPI) and 190–255 (TTPI…PMAS). NAD(+)-binding positions include 292–294 (DSS) and 342–344 (GMG). K(+) is bound by residues G344 and G346. Residue S347 participates in IMP binding. Position 349 (C349) interacts with K(+). The Thioimidate intermediate role is filled by C349. IMP contacts are provided by residues 382 to 384 (DGG), 405 to 406 (GG), and 430 to 434 (YRGMG). R448 (proton acceptor) is an active-site residue. Q461 lines the IMP pocket. K(+)-binding residues include E520, G521, and G522.

It belongs to the IMPDH/GMPR family. In terms of assembly, homotetramer. K(+) serves as cofactor.

The protein resides in the cytoplasm. It carries out the reaction IMP + NAD(+) + H2O = XMP + NADH + H(+). The protein operates within purine metabolism; XMP biosynthesis via de novo pathway; XMP from IMP: step 1/1. With respect to regulation, mycophenolic acid (MPA) is a non-competitive inhibitor that prevents formation of the closed enzyme conformation by binding to the same site as the amobile flap. In contrast, mizoribine monophosphate (MZP) is a competitive inhibitor that induces the closed conformation. MPA is a potent inhibitor of mammalian IMPDHs but a poor inhibitor of the bacterial enzymes. MZP is a more potent inhibitor of bacterial IMPDH. Its function is as follows. Catalyzes the conversion of inosine 5'-phosphate (IMP) to xanthosine 5'-phosphate (XMP), the first committed and rate-limiting step in the de novo synthesis of guanine nucleotides, and therefore plays an important role in the regulation of cell growth. In Caenorhabditis elegans, this protein is Inosine-5'-monophosphate dehydrogenase.